We begin with the raw amino-acid sequence, 557 residues long: Probable serine/threonine-protein kinase WNK7 (557 aa).

Residues 28–285 (IRYKEVIGKG…AEELLLDSFL (258 aa)) form the Protein kinase domain. Residues 108 to 111 (TELF) and lysine 158 each bind ATP. The active-site Proton acceptor is the aspartate 175. Residues 451–477 (QNQSSKDNHQNGASSQAGESISHSLSS) show a composition bias toward polar residues. The disordered stretch occupies residues 451-517 (QNQSSKDNHQ…EEEEDERLKE (67 aa)). Residue serine 505 is modified to Phosphoserine.

This sequence belongs to the protein kinase superfamily. Ser/Thr protein kinase family. WNK subfamily.

It catalyses the reaction L-seryl-[protein] + ATP = O-phospho-L-seryl-[protein] + ADP + H(+). The catalysed reaction is L-threonyl-[protein] + ATP = O-phospho-L-threonyl-[protein] + ADP + H(+). Functionally, may regulate flowering time by modulating the photoperiod pathway. This Arabidopsis thaliana (Mouse-ear cress) protein is Probable serine/threonine-protein kinase WNK7 (WNK7).